The sequence spans 92 residues: Small ribosomal subunit protein uS19 (92 aa).

Positions 73-92 are disordered; that stretch reads EFSPTRSFRGHAGAKNKGKK. Residues 80–92 show a composition bias toward basic residues; sequence FRGHAGAKNKGKK.

Belongs to the universal ribosomal protein uS19 family.

Its function is as follows. Protein S19 forms a complex with S13 that binds strongly to the 16S ribosomal RNA. The polypeptide is Small ribosomal subunit protein uS19 (Flavobacterium psychrophilum (strain ATCC 49511 / DSM 21280 / CIP 103535 / JIP02/86)).